A 140-amino-acid polypeptide reads, in one-letter code: Blasticidin-S deaminase (140 aa).

The region spanning 8–140 (QQDLELVEVA…ELIPLKYTRN (133 aa)) is the CMP/dCMP-type deaminase domain. Cys-59 contributes to the Zn(2+) binding site. Glu-61 acts as the Proton donor in catalysis. The Zn(2+) site is built by Cys-100 and Cys-103.

The protein belongs to the cytidine and deoxycytidylate deaminase family. Zn(2+) is required as a cofactor.

The catalysed reaction is blasticidin S + H2O + H(+) = deaminohydroxyblasticidin S + NH4(+). Its function is as follows. Catalyzes the deamination of the cytosine moiety of the antibiotics blasticidin S, cytomycin and acetylblasticidin S. In Bacillus cereus, this protein is Blasticidin-S deaminase (bsr).